The following is a 331-amino-acid chain: Probable endo-beta-1,4-glucanase B (331 aa).

Positions 1 to 18 (MKFQSTLLLAAAAGSALA) are cleaved as a signal peptide. Residues N38 and N100 are each glycosylated (N-linked (GlcNAc...) asparagine). E160 functions as the Proton donor in the catalytic mechanism. Residue N211 is glycosylated (N-linked (GlcNAc...) asparagine). E266 serves as the catalytic Nucleophile. N-linked (GlcNAc...) asparagine glycosylation is present at N288.

This sequence belongs to the glycosyl hydrolase 5 (cellulase A) family.

It localises to the secreted. It carries out the reaction Endohydrolysis of (1-&gt;4)-beta-D-glucosidic linkages in cellulose, lichenin and cereal beta-D-glucans.. Its function is as follows. Has endoglucanase activity on substrates containing beta-1,4 glycosidic bonds, like in carboxymethylcellulose (CMC), hydroxyethylcellulose (HEC) and beta-glucan. Involved in the degradation of complex natural cellulosic substrates. In Aspergillus niger (strain ATCC MYA-4892 / CBS 513.88 / FGSC A1513), this protein is Probable endo-beta-1,4-glucanase B (eglB).